The following is a 333-amino-acid chain: Adenosine deaminase (333 aa).

2 residues coordinate Zn(2+): H12 and H14. Residues H14, D16, and G170 each contribute to the substrate site. H197 is a binding site for Zn(2+). Catalysis depends on E200, which acts as the Proton donor. D278 serves as a coordination point for Zn(2+). D279 contributes to the substrate binding site.

Belongs to the metallo-dependent hydrolases superfamily. Adenosine and AMP deaminases family. Adenosine deaminase subfamily. It depends on Zn(2+) as a cofactor.

It catalyses the reaction adenosine + H2O + H(+) = inosine + NH4(+). It carries out the reaction 2'-deoxyadenosine + H2O + H(+) = 2'-deoxyinosine + NH4(+). Catalyzes the hydrolytic deamination of adenosine and 2-deoxyadenosine. This chain is Adenosine deaminase, found in Salmonella typhi.